The following is a 393-amino-acid chain: Phosphoglycerate kinase (393 aa).

Residues 22-24 (DFN), Arg-37, 60-63 (HLGR), Arg-119, and Arg-152 contribute to the substrate site. Residues Lys-202, Gly-293, Glu-324, and 350–353 (GGDS) contribute to the ATP site.

It belongs to the phosphoglycerate kinase family. As to quaternary structure, monomer.

It is found in the cytoplasm. It catalyses the reaction (2R)-3-phosphoglycerate + ATP = (2R)-3-phospho-glyceroyl phosphate + ADP. The protein operates within carbohydrate degradation; glycolysis; pyruvate from D-glyceraldehyde 3-phosphate: step 2/5. This chain is Phosphoglycerate kinase, found in Borreliella afzelii (strain PKo) (Borrelia afzelii).